The primary structure comprises 331 residues: uncharacterized protein (331 aa).

Belongs to the ornithine cyclodeaminase/mu-crystallin family.

This is an uncharacterized protein from Sinorhizobium fredii (strain NBRC 101917 / NGR234).